A 542-amino-acid polypeptide reads, in one-letter code: MARYVFITGGVVSSLGKGIAAAALAALLQARGYRVRLRKLDPYLNVDPGTMSPYQHGEVFVTDDGAETDLDLGHYERFTGRSANSQDNITTGRIYRNIIERERRGDYLGATVQVIPHVTDEIKRFITTGNEEFDFVLCEIGGTVGDIEAMPFLEAIRQLGNELSRQNVIYIHLTLMPFIPSAGELKTKPTQHSVKELQSVGISPDILLVRADRSIPETERCKLSLFCNVRANAVIQALDMPTIYDVPMAYHKEGLDSEVLCAFGIDSAPPPQMDLWEDITHRIHHPEGEVTIAVVGKYTGLKDAYKSLIEAIAHGGLANKVKVNIEWIDSQLFEKENSVLALQKAHGILVPGAFGARGAEGKIRAIQFARERKIPFLGICFGMQLACIEAARNIAQIENASSSEFCETENPIVGLMTEWLKGDVLEKRTRNGDLGGSMRLGAFAAELKEESHIAKIYGMTKIVERHRHRYEVNIDYKDKLEQCGLIFSGMSPDGVLPETIEYVDHPWFIGVQYHPELKSRPFDPHPLFSSFIEAAVEQSRLV.

Residues 1 to 265 (MARYVFITGG…DSEVLCAFGI (265 aa)) form an amidoligase domain region. Position 13 (serine 13) interacts with CTP. Serine 13 lines the UTP pocket. Position 14-19 (14-19 (SLGKGI)) interacts with ATP. Tyrosine 54 is a binding site for L-glutamine. Aspartate 71 is a binding site for ATP. The Mg(2+) site is built by aspartate 71 and glutamate 139. Residues 146–148 (DIE), 186–191 (KTKPTQ), and lysine 222 each bind CTP. Residues 186–191 (KTKPTQ) and lysine 222 each bind UTP. Residues 291–541 (TIAVVGKYTG…IEAAVEQSRL (251 aa)) enclose the Glutamine amidotransferase type-1 domain. Alanine 353 contributes to the L-glutamine binding site. Cysteine 380 serves as the catalytic Nucleophile; for glutamine hydrolysis. L-glutamine-binding positions include 381-384 (FGMQ), glutamate 404, and arginine 469. Catalysis depends on residues histidine 514 and glutamate 516.

It belongs to the CTP synthase family. As to quaternary structure, homotetramer.

It carries out the reaction UTP + L-glutamine + ATP + H2O = CTP + L-glutamate + ADP + phosphate + 2 H(+). The enzyme catalyses L-glutamine + H2O = L-glutamate + NH4(+). It catalyses the reaction UTP + NH4(+) + ATP = CTP + ADP + phosphate + 2 H(+). It participates in pyrimidine metabolism; CTP biosynthesis via de novo pathway; CTP from UDP: step 2/2. With respect to regulation, allosterically activated by GTP, when glutamine is the substrate; GTP has no effect on the reaction when ammonia is the substrate. The allosteric effector GTP functions by stabilizing the protein conformation that binds the tetrahedral intermediate(s) formed during glutamine hydrolysis. Inhibited by the product CTP, via allosteric rather than competitive inhibition. Catalyzes the ATP-dependent amination of UTP to CTP with either L-glutamine or ammonia as the source of nitrogen. Regulates intracellular CTP levels through interactions with the four ribonucleotide triphosphates. The chain is CTP synthase from Bartonella tribocorum (strain CIP 105476 / IBS 506).